We begin with the raw amino-acid sequence, 70 residues long: Small ribosomal subunit protein bS21C (70 aa).

It belongs to the bacterial ribosomal protein bS21 family.

This is Small ribosomal subunit protein bS21C from Burkholderia pseudomallei (strain 1710b).